We begin with the raw amino-acid sequence, 213 residues long: Probable chemoreceptor glutamine deamidase CheD (213 aa).

Over residues 1–12 (MNRHRPHSHRSK) the composition is skewed to basic residues. Residues 1-25 (MNRHRPHSHRSKPASTQDQPDSVRR) are disordered.

The protein belongs to the CheD family.

It carries out the reaction L-glutaminyl-[protein] + H2O = L-glutamyl-[protein] + NH4(+). Functionally, probably deamidates glutamine residues to glutamate on methyl-accepting chemotaxis receptors (MCPs), playing an important role in chemotaxis. The polypeptide is Probable chemoreceptor glutamine deamidase CheD (Rhodopseudomonas palustris (strain BisA53)).